The sequence spans 741 residues: NUT family member 2G (741 aa).

Disordered regions lie at residues 172-200 (PGNA…PDDS), 293-375 (IQKS…PEEI), 391-424 (LGSH…SDPG), 496-624 (RAAP…LPGM), and 638-741 (RLSQ…HCSQ). Over residues 304–321 (SLPPPAPPRLEPRGPPAP) the composition is skewed to pro residues. Basic and acidic residues predominate over residues 402-412 (EGQREKGKVEQ). Residues 528–545 (QRVSVETSPPQTAAQDPQ) show a composition bias toward polar residues. Residues 639-650 (LSQSPVPSSGLL) are compositionally biased toward low complexity. Positions 731–741 (SRRKKKRHCSQ) are enriched in basic residues.

Belongs to the NUT family.

This chain is NUT family member 2G (NUTM2G), found in Homo sapiens (Human).